A 126-amino-acid chain; its full sequence is Probable prefoldin subunit 4 (126 aa).

It belongs to the prefoldin subunit beta family. As to quaternary structure, heterohexamer of two PFD-alpha type and four PFD-beta type subunits.

In terms of biological role, binds specifically to cytosolic chaperonin (c-CPN) and transfers target proteins to it. Binds to nascent polypeptide chain and promotes folding in an environment in which there are many competing pathways for nonnative proteins. This chain is Probable prefoldin subunit 4 (pfd-4), found in Caenorhabditis elegans.